The sequence spans 326 residues: Organic solute transporter subunit alpha (326 aa).

The Extracellular portion of the chain corresponds to 1 to 28 (METSNFTLFDPRCRAEAPFAIDAIKQLD). N5 carries an N-linked (GlcNAc...) asparagine glycan. A helical transmembrane segment spans residues 29 to 49 (IFGKVLYTVLTLMATASMLVF). Topologically, residues 50-67 (IEECIYIYKKVPAHKKST) are cytoplasmic. A helical transmembrane segment spans residues 68–88 (IIWVTGVAPVMAIMSCLGMWV). At 89 to 99 (PRATMFTDMTS) the chain is on the extracellular side. A helical membrane pass occupies residues 100 to 120 (ATYFAIVVFKFLILMIEEVGG). Over 121 to 161 (DNAFLRRCEKQTFKISTGPCCCCCPCLPNVPITRRSLFILK) the chain is Cytoplasmic. Residues 162–182 (LGSYQFALMKLVLTIFSIVLW) form a helical membrane-spanning segment. The Extracellular portion of the chain corresponds to 183–198 (TNGSFSLTNVSASGAA). Residues N184 and N191 are each glycosylated (N-linked (GlcNAc...) asparagine). The chain crosses the membrane as a helical span at residues 199–219 (IWINSFIGVLTIIALWPVAIM). Topologically, residues 220-237 (FMHVREALRTLKIVPKYA) are cytoplasmic. The chain crosses the membrane as a helical span at residues 238-258 (MYQLVLILSQLQTAIINILAL). N259 carries N-linked (GlcNAc...) asparagine glycosylation. Residues 259-275 (NGTIACSPPYSSQARGY) are Extracellular-facing. Residues 276-296 (MMSQQLLIVEMFIITLVTRVL) form a helical membrane-spanning segment. Residues 297 to 326 (YRRQYEPIPEPDDVEEKKTVLSSKKAIDVA) are Cytoplasmic-facing.

The protein belongs to the OST-alpha family. In terms of assembly, interacts with slc51b. The Ost-alpha/Ost-beta complex is a heterodimer composed of alpha (slc51a) and beta (slc51b) subunit.

Its subcellular location is the cell membrane. It localises to the endoplasmic reticulum membrane. The enzyme catalyses taurocholate(out) = taurocholate(in). It carries out the reaction prostaglandin E2(out) = prostaglandin E2(in). It catalyses the reaction estrone 3-sulfate(out) = estrone 3-sulfate(in). The catalysed reaction is dehydroepiandrosterone 3-sulfate(out) = dehydroepiandrosterone 3-sulfate(in). The enzyme catalyses tauroursodeoxycholate(out) = tauroursodeoxycholate(in). It carries out the reaction glycoursodeoxycholate(out) = glycoursodeoxycholate(in). It catalyses the reaction glycocholate(out) = glycocholate(in). The catalysed reaction is taurochenodeoxycholate(out) = taurochenodeoxycholate(in). The enzyme catalyses glycochenodeoxycholate(out) = glycochenodeoxycholate(in). It carries out the reaction taurodeoxycholate(out) = taurodeoxycholate(in). It catalyses the reaction glycodeoxycholate(out) = glycodeoxycholate(in). Functionally, essential component of the Ost-alpha/Ost-beta complex, a heterodimer that acts as the intestinal basolateral transporter responsible for the translocation of bile acids (such as taurocholate), steroids (such as estrone sulfate), and eicosanoids (such as prostaglandin E2). In Danio rerio (Zebrafish), this protein is Organic solute transporter subunit alpha (slc51a).